The sequence spans 145 residues: UPF0763 protein WS1752 (145 aa).

It belongs to the UPF0763 family.

This Wolinella succinogenes (strain ATCC 29543 / DSM 1740 / CCUG 13145 / JCM 31913 / LMG 7466 / NCTC 11488 / FDC 602W) (Vibrio succinogenes) protein is UPF0763 protein WS1752.